Here is a 233-residue protein sequence, read N- to C-terminus: DNA-directed RNA polymerase I subunit RPA34 (233 aa).

A phosphoserine mark is found at Ser-10, Ser-12, Ser-14, and Ser-60. Basic and acidic residues predominate over residues 179-191; the sequence is DFHVAEEVKENKK. A disordered region spans residues 179–233; that stretch reads DFHVAEEVKENKKEPKKRSHHDDEEESSEKKKKKKEKREKREKKDKKDKKKKHRD. The segment covering 208–233 has biased composition (basic residues); the sequence is KKKKKKEKREKREKKDKKDKKKKHRD.

This sequence belongs to the eukaryotic RPA34 RNA polymerase subunit family. Component of the RNA polymerase I (Pol I) complex consisting of 14 subunits: RPA135, RPA190, RPC40, RPA14, RPB5, RPO26, RPA43, RPB8, RPA12, RPB10, RPC19, RPC10, RPA49 and RPA34. The complex is composed of a horseshoe-shaped core containing ten subunits (RPA135, RPA190, RPB5, RPO26, RPB8, RPB10, RPC10, RPA12, RPC19 and RPC40) where RPA135 and RPA190 form the DNA-binding cleft. Outside of the core, RPA14 and RPA43 form the stalk that mediates interactions with transcription initiation factors and newly synthesized RNA. Forms a TFIIF-like heterodimer with RPA49; the heterodimer formed by RPA34 and RPA49 can be dissociated from the Pol I core giving rise to a 12 subunit form A* of Pol I (formerly called pol A) that shows impaired transcript elongation activity and increased sensitivity to alpha-amanitin. The heterodimer formed by RPA34 and RPA49 stabilizes subunit RPA12 and stimulates RPA12-dependent RNA cleavage.

The protein resides in the nucleus. Its subcellular location is the nucleolus. Its function is as follows. DNA-dependent RNA polymerases catalyze the transcription of DNA into RNA using the four ribonucleoside triphosphates as substrates. Component of RNA polymerase I (Pol I) which synthesizes ribosomal RNA precursors. Besides, RNA polymerase I has intrinsic RNA cleavage activity. The heterodimer formed by RPA34 and RPA49 stimulates transcript elongation by Pol I. In Saccharomyces cerevisiae (strain ATCC 204508 / S288c) (Baker's yeast), this protein is DNA-directed RNA polymerase I subunit RPA34 (RPA34).